Consider the following 573-residue polypeptide: Ribosomal RNA-processing protein 9 (573 aa).

The disordered stretch occupies residues 1–63 (MSDVTQQKKR…FEGENPADKR (63 aa)). S2 carries the N-acetylserine modification. Acidic residues predominate over residues 25 to 58 (DEEITDPSSNEDEQLEVSDEEDALESEEEFEGEN). The stretch at 32–106 (SSNEDEQLEV…KERTIDEYNN (75 aa)) forms a coiled coil. Residue S50 is modified to Phosphoserine. 6 WD repeats span residues 234–273 (GHYD…PVKV), 278–317 (DRRG…QLEI), 320–359 (GHHD…RLTF), 397–435 (FCEG…PIFT), 471–509 (QPFW…RSFE), and 516–562 (GAKG…ARNG).

The protein belongs to the WD repeat RRP9 family. In terms of assembly, interacts with UTP25. Component of the ribosomal small subunit (SSU) processome composed of at least 40 protein subunits and snoRNA U3.

The protein localises to the nucleus. It is found in the nucleolus. In terms of biological role, involved in nucleolar processing of pre-18S ribosomal RNA. Required for efficient pre-rRNA cleavage at sites A0, A1 and A2, and biosynthesis of 18S rRNA. The polypeptide is Ribosomal RNA-processing protein 9 (RRP9) (Saccharomyces cerevisiae (strain ATCC 204508 / S288c) (Baker's yeast)).